Consider the following 245-residue polypeptide: 1-(5-phosphoribosyl)-5-[(5-phosphoribosylamino)methylideneamino] imidazole-4-carboxamide isomerase (245 aa).

Residue aspartate 12 is the Proton acceptor of the active site. Aspartate 131 (proton donor) is an active-site residue.

This sequence belongs to the HisA/HisF family.

Its subcellular location is the cytoplasm. The enzyme catalyses 1-(5-phospho-beta-D-ribosyl)-5-[(5-phospho-beta-D-ribosylamino)methylideneamino]imidazole-4-carboxamide = 5-[(5-phospho-1-deoxy-D-ribulos-1-ylimino)methylamino]-1-(5-phospho-beta-D-ribosyl)imidazole-4-carboxamide. It participates in amino-acid biosynthesis; L-histidine biosynthesis; L-histidine from 5-phospho-alpha-D-ribose 1-diphosphate: step 4/9. The protein is 1-(5-phosphoribosyl)-5-[(5-phosphoribosylamino)methylideneamino] imidazole-4-carboxamide isomerase of Thermobifida fusca (strain YX).